A 1021-amino-acid polypeptide reads, in one-letter code: MNLDLGSTVRGYESDKDTFPQSKGVSSSQKEQHSQLNQTKIAYEQRLLNDLEDMDDPLDLFLDYMIWISTSYIEVDSESGQEVLRSTMERCLIYIQDMETYRNDPRFLKIWIWYINLFLSNNFHESENTFKYMFNKGIGTKLSLFYEEFSKLLENAQFFLEAKVLLELGAENNCRPYNRLLRSLSNYEDRLREMNIVENQNSVPDSRERLKGRLIYRTAPFFIRKFLTSSLMTDDKENRANLNSNVGVGKSAPNVYQDSIVVADFKSETERLNLNSSKQPSNQRLKNGNKKTSIYADQKQSNNPVYKLINTPGRKPERIVFNFNLIYPENDEEFNTEEILAMIKGLYKVQRRGKKHTEDYTSDKNRKKRKLDVLVERRQDLPSSQPPVVPKSTRIEVFKDDDNPSQSTHHKNTQVQVQTTTSILPLKPVVDGNLAHETPVKPSLTSNASRSPTVTAFSKDAINEVFSMFNQHYSTPGALLDGDDTTTSKFNVFENFTQEFTAKNIEDLTEVKDPKQETVSQQTTSTNETNDRYERLSNSSTRPEKADYMTPIKETTETDVVPIIQTPKEQIRTEDKKSGDNTETQTQLTSTTIQSSPFLTQPEPQAEKLLQTAEHSEKSKEHYPTIIPPFTKIKNQPPVIIENPLSNNLRAKFLSEISPPLFQYNTFYNYNQELKMSSLLKKIHRVSRNENKNPIVDFKKTGDLYCIRGELGEGGYATVYLAESSQGHLRALKVEKPASVWEYYIMSQVEFRLRKSTILKSIINASALHLFLDESYLVLNYASQGTVLDLINLQREKAIDGNGIMDEYLCMFITVELMKVLEKIHEVGIIHGDLKPDNCMIRLEKPGEPLGAHYMRNGEDGWENKGIYLIDFGRSFDMTLLPPGTKFKSNWKADQQDCWEMRAGKPWSYEADYYGLAGVIHSMLFGKFIETIQLQNGRCKLKNPFKRYWKKEIWGVIFDLLLNSGQASNQALPMTEKIVEIRNLIESHLEQHAENHLRNVILSIEEELSHFQYKGKPSRRF.

The tract at residues 1–35 (MNLDLGSTVRGYESDKDTFPQSKGVSSSQKEQHSQ) is disordered. A compositionally biased stretch (polar residues) spans 19-35 (FPQSKGVSSSQKEQHSQ). In terms of domain architecture, BUB1 N-terminal spans 47–212 (LLNDLEDMDD…VPDSRERLKG (166 aa)). Residues 289–359 (NKKTSIYADQ…QRRGKKHTED (71 aa)) form an interaction with BUB3 region. Disordered stretches follow at residues 351–370 (RRGKKHTEDYTSDKNRKKRK), 398–420 (FKDDDNPSQSTHHKNTQVQVQTT), 511–545 (VKDPKQETVSQQTTSTNETNDRYERLSNSSTRPEK), and 567–600 (PKEQIRTEDKKSGDNTETQTQLTSTTIQSSPFLT). Residues 517–528 (ETVSQQTTSTNE) show a composition bias toward polar residues. The segment covering 569–580 (EQIRTEDKKSGD) has biased composition (basic and acidic residues). The segment covering 582 to 596 (TETQTQLTSTTIQSS) has biased composition (low complexity). The Protein kinase domain maps to 705–1021 (YCIRGELGEG…QYKGKPSRRF (317 aa)). 3 residues coordinate ATP: G715, Y716, and A717. The active-site Proton acceptor is D833. 3 residues coordinate ATP: D837, N838, and D871.

It belongs to the protein kinase superfamily. Ser/Thr protein kinase family. BUB1 subfamily. In terms of assembly, part of complex consisting of MAD1, BUB1 and BUB3 after activation of spindle checkpoint. Part of the BUB1-BUB3 complex, composed of BUB1 and BUB3. Interacts with SPC105 (via phosphorylated MELT motifs); the interaction occurs when part of the BUB1-BUB3 complex. Interacts with SKP1; the interaction is direct. The cofactor is Mg(2+). Post-translationally, autophosphorylated.

It localises to the nucleus. The protein resides in the chromosome. It is found in the centromere. Its subcellular location is the kinetochore. The catalysed reaction is L-seryl-[protein] + ATP = O-phospho-L-seryl-[protein] + ADP + H(+). It carries out the reaction L-threonyl-[protein] + ATP = O-phospho-L-threonyl-[protein] + ADP + H(+). Involved in mitotic spindle assembly checkpoint signaling, a process that delays anaphase until chromosomes are bioriented on the spindle, and in the repair of incorrect mitotic kinetochore-spindle microtubule attachments. The formation of a MAD1-BUB1-BUB3 complex seems to be required for the spindle checkpoint mechanism. Phosphorylates BUB3. Also autophosphorylates. Associates with centromere (CEN) DNA via interaction with SKP1. The association with SKP1 is required for the mitotic delay induced by kinetochore tension defects, but not for the arrest induced by spindle depolymerization or kinetochore assembly defects. This is Spindle assembly checkpoint serine/threonine-protein kinase BUB1 (BUB1) from Saccharomyces cerevisiae (strain ATCC 204508 / S288c) (Baker's yeast).